We begin with the raw amino-acid sequence, 307 residues long: Ribonuclease Z (307 aa).

7 residues coordinate Zn(2+): H63, H65, D67, H68, H143, D213, and H271. Catalysis depends on D67, which acts as the Proton acceptor.

This sequence belongs to the RNase Z family. In terms of assembly, homodimer. It depends on Zn(2+) as a cofactor.

It carries out the reaction Endonucleolytic cleavage of RNA, removing extra 3' nucleotides from tRNA precursor, generating 3' termini of tRNAs. A 3'-hydroxy group is left at the tRNA terminus and a 5'-phosphoryl group is left at the trailer molecule.. Zinc phosphodiesterase, which displays some tRNA 3'-processing endonuclease activity. Probably involved in tRNA maturation, by removing a 3'-trailer from precursor tRNA. This is Ribonuclease Z from Lactococcus lactis subsp. lactis (strain IL1403) (Streptococcus lactis).